Consider the following 231-residue polypeptide: 7-cyano-7-deazaguanine synthase (231 aa).

8-18 (FSGGQDSTTCL) lines the ATP pocket. Zn(2+) is bound by residues Cys188, Cys197, Cys200, and Cys203.

This sequence belongs to the QueC family. It depends on Zn(2+) as a cofactor.

The enzyme catalyses 7-carboxy-7-deazaguanine + NH4(+) + ATP = 7-cyano-7-deazaguanine + ADP + phosphate + H2O + H(+). It functions in the pathway purine metabolism; 7-cyano-7-deazaguanine biosynthesis. Functionally, catalyzes the ATP-dependent conversion of 7-carboxy-7-deazaguanine (CDG) to 7-cyano-7-deazaguanine (preQ(0)). This is 7-cyano-7-deazaguanine synthase from Citrobacter koseri (strain ATCC BAA-895 / CDC 4225-83 / SGSC4696).